We begin with the raw amino-acid sequence, 390 residues long: 4-O-beta-D-mannosyl-D-glucose phosphorylase (390 aa).

This sequence belongs to the glycosyl hydrolase 130 family.

It catalyses the reaction 4-O-beta-D-mannopyranosyl-D-glucopyranose + phosphate = alpha-D-mannose 1-phosphate + D-glucose. Functionally, converts 4-O-beta-D-mannopyranosyl-D-glucopyranose (Man-Glc) to mannose 1-phosphate (Man1P) and glucose. Involved in a mannan catabolic pathway which feeds into glycolysis. The polypeptide is 4-O-beta-D-mannosyl-D-glucose phosphorylase (Bacteroides fragilis (strain ATCC 25285 / DSM 2151 / CCUG 4856 / JCM 11019 / LMG 10263 / NCTC 9343 / Onslow / VPI 2553 / EN-2)).